Reading from the N-terminus, the 496-residue chain is Pre-glycoprotein polyprotein GP complex (496 aa).

Gly2 is lipidated: N-myristoyl glycine; by host. At 2 to 17 (GQLISFFQEIPVFLQE) the chain is on the extracellular side. Residues 18 to 32 (ALNIALVAVSLIAVI) form a helical membrane-spanning segment. A topological domain (cytoplasmic) is located at residue Lys33. Residues 34–53 (GIINLYKSGLFQFIFFLLLA) form a helical membrane-spanning segment. Extracellular-side segments run 54 to 58 (GRSCS) and 59 to 435 (DGTF…TLVD). Cys57 contacts Zn(2+). N-linked (GlcNAc...) asparagine; by host glycans are attached at residues Asn83, Asn95, Asn137, Asn166, and Asn178. Intrachain disulfides connect Cys92–Cys237, Cys135–Cys164, Cys207–Cys213, Cys282–Cys295, Cys304–Cys313, and Cys367–Cys388. N-linked (GlcNAc...) asparagine; by host glycans are attached at residues Asn368, Asn376, Asn393, and Asn398. A helical membrane pass occupies residues 436–456 (ICFWSTVFFTASLFLHLVGIP). Residues 457–496 (THRHLKGEACPLPHKLDSFGGCRCGKYPRLRKPTIWHKRH) lie on the Cytoplasmic side of the membrane. Zn(2+) is bound by residues His458, His460, Cys466, His470, Cys478, Cys480, and His496.

It belongs to the arenaviridae GPC protein family. As to quaternary structure, homotetramer; disulfide-linked. Interacts with host TFRC. Homotetramer. GP2 homotetramers bind through ionic interactions with GP1 homotetramers to form the GP complex together with the stable signal peptide. The GP-C polyprotein interacts with the host protease MBTPS1/SKI-1 resulting in the polyprotein processing. Specific enzymatic cleavages in vivo yield mature proteins. GP-C polyprotein is cleaved in the endoplasmic reticulum by the host protease MBTPS1. Only cleaved glycoprotein is incorporated into virions. Post-translationally, the SSP remains stably associated with the GP complex following cleavage by signal peptidase and plays crucial roles in the trafficking of GP through the secretory pathway. In terms of processing, myristoylation is necessary for GP2-mediated fusion activity.

It is found in the virion membrane. Its subcellular location is the host endoplasmic reticulum membrane. The protein localises to the host Golgi apparatus membrane. The protein resides in the host cell membrane. Functionally, class I viral fusion protein that directs fusion of viral and host endosomal membranes, leading to delivery of the nucleocapsid into the cytoplasm. Membrane fusion is mediated by irreversible conformational changes induced upon acidification in the endosome. Its function is as follows. Stable signal peptide (SSP): cleaved and functions as a signal peptide. In addition, it is also retained as the third component of the GP complex. The SSP is required for efficient glycoprotein expression, post-translational maturation cleavage of GP1 and GP2, glycoprotein transport to the cell surface plasma membrane, formation of infectious virus particles, and acid pH-dependent glycoprotein-mediated cell fusion. In terms of biological role, interacts with the host receptor. Mediates virus attachment to host TFRC. This attachment induces virion internalization predominantly through clathrin-mediated endocytosis. In Machupo virus (MACV), this protein is Pre-glycoprotein polyprotein GP complex.